Reading from the N-terminus, the 1963-residue chain is Myosin-4 (1963 aa).

Residues 28-77 (DSKKNVWIPDPEEGYLAGEITATKGDQVTIVTARGNEVTLKKELVQEMNP) enclose the Myosin N-terminal SH3-like domain. The 707-residue stretch at 81 to 787 (EKTEDMSNLS…VLAHLEDIRD (707 aa)) folds into the Myosin motor domain. An N6,N6,N6-trimethyllysine modification is found at K125. Residue 174–181 (GESGAGKT) coordinates ATP. Actin-binding regions lie at residues 662–684 (LNNL…IPNE) and 766–780 (RIGL…GVLA). Positions 848-1161 (MLKAGKEAEE…LEELGEKLDE (314 aa)) are alpha-helical tailpiece (S2). The stretch at 848–1963 (MLKAGKEAEE…SPSRARASDF (1116 aa)) forms a coiled coil. Composition is skewed to basic and acidic residues over residues 970–988 (LRKA…RSLQ) and 1133–1146 (NERQ…RAKS). Disordered stretches follow at residues 970–990 (LRKA…LQDE) and 1125–1146 (SELE…RAKS). Residues 1162–1173 (QGGATAAQVEVN) are hinge. The light meromyosin (LMM) stretch occupies residues 1162–1963 (QGGATAAQVE…SPSRARASDF (802 aa)). Disordered regions lie at residues 1317-1336 (LTSQ…RERQ) and 1912-1963 (LEDA…ASDF). A compositionally biased stretch (basic and acidic residues) spans 1322–1336 (EEARRTADEEARERQ).

This sequence belongs to the TRAFAC class myosin-kinesin ATPase superfamily. Myosin family. Muscle myosin is a hexameric protein that consists of 2 heavy chain subunits (MHC), 2 alkali light chain subunits (MLC) and 2 regulatory light chain subunits (MLC-2). Forms a complex composed of chaperone unc-45, unc-54 and ubiquitin-protein ligase ufd-2; promotes poly-ubiquitination of unfolded unc-54. Within the complex interacts with unc-45 (via UCS domain) and ufd-2. Interacts with itr-1 (via c-terminal coiled coil domain). In terms of processing, unfolded unc-54 is poly-ubiquitinated by ufd-2.

The protein localises to the cytoplasm. It localises to the myofibril. In terms of biological role, required for muscle contraction. The polypeptide is Myosin-4 (unc-54) (Caenorhabditis elegans).